A 436-amino-acid polypeptide reads, in one-letter code: MDDLNYATLTEALEQTVFENFDDGLYIGMMSGTSLDGMDAILCQFSNHTNSSNISNEDNTQQPMHLLATYSQDFPPRLREVLLALCQPNGINQLTPTAGEPDSELEWFGWASKAYAEFASDVVNTLLQQSNTDIESVLAIGCHGQTVRHRPQMGFSLQLVDANIIAERTGISVVSDFRRRDMAVGGQGAPLVPAFHQALFAVPDSTRILLNLGGIANIAVLPAISDDLSDFNEHSDNQPSDSVVGYDTGPANLLLDAWTALHTDKDYDAGGTWAQSGQVVEPLLNQLLEHPFFVKAYPKSTGREDFNLAWLQDELQKFDQAAADIRYSSADVQATLTELTAISASAQINIFINASSNNAVYVCGGGALNDYLMMRLQAHLPRCKVETTASLGLEPTWVEAVAFAWLARQTLMGETGNLPAVTGASKGVVLGQVCFA.

Residue 32–39 coordinates ATP; that stretch reads GTSLDGMD.

The protein belongs to the anhydro-N-acetylmuramic acid kinase family.

The enzyme catalyses 1,6-anhydro-N-acetyl-beta-muramate + ATP + H2O = N-acetyl-D-muramate 6-phosphate + ADP + H(+). Its pathway is amino-sugar metabolism; 1,6-anhydro-N-acetylmuramate degradation. It participates in cell wall biogenesis; peptidoglycan recycling. Its function is as follows. Catalyzes the specific phosphorylation of 1,6-anhydro-N-acetylmuramic acid (anhMurNAc) with the simultaneous cleavage of the 1,6-anhydro ring, generating MurNAc-6-P. Is required for the utilization of anhMurNAc either imported from the medium or derived from its own cell wall murein, and thus plays a role in cell wall recycling. This Psychrobacter arcticus (strain DSM 17307 / VKM B-2377 / 273-4) protein is Anhydro-N-acetylmuramic acid kinase.